The primary structure comprises 495 residues: Protein-serine O-palmitoleoyltransferase porcupine (495 aa).

Transmembrane regions (helical) follow at residues 46-66, 92-112, 184-204, 232-252, 358-378, 403-422, 434-454, and 475-495; these read TQYI…VLIV, VIDH…AVQW, TVLS…GPWI, MLIH…FLLT, PFGT…LHGL, LATI…SCTV, VINM…GCIF, and TELN…YFVI. H376 is a catalytic residue.

Belongs to the membrane-bound acyltransferase family. Porcupine subfamily.

The protein resides in the endoplasmic reticulum membrane. The enzyme catalyses [Wnt protein]-L-serine + (9Z)-hexadecenoyl-CoA = [Wnt protein]-O-(9Z)-hexadecenoyl-L-serine + CoA. Functionally, protein-serine O-palmitoleoyltransferase that acts as a key regulator of the Wnt signaling pathway by mediating the attachment of palmitoleate, a 16-carbon monounsaturated fatty acid (C16:1(9Z)), to Wnt proteins. Serine palmitoleoylation of WNT proteins is required for efficient binding to frizzled receptors. The chain is Protein-serine O-palmitoleoyltransferase porcupine from Anopheles gambiae (African malaria mosquito).